A 360-amino-acid polypeptide reads, in one-letter code: DNA replication and repair protein RecF (360 aa).

ATP is bound at residue 30-37; that stretch reads GQNGSGKT.

This sequence belongs to the RecF family.

Its subcellular location is the cytoplasm. Functionally, the RecF protein is involved in DNA metabolism; it is required for DNA replication and normal SOS inducibility. RecF binds preferentially to single-stranded, linear DNA. It also seems to bind ATP. The sequence is that of DNA replication and repair protein RecF from Shewanella frigidimarina (strain NCIMB 400).